Consider the following 141-residue polypeptide: Large ribosomal subunit protein bL17 (141 aa).

Belongs to the bacterial ribosomal protein bL17 family. Part of the 50S ribosomal subunit. Contacts protein L32.

In Rhizobium meliloti (strain 1021) (Ensifer meliloti), this protein is Large ribosomal subunit protein bL17.